Consider the following 118-residue polypeptide: NADH-ubiquinone oxidoreductase chain 3 (118 aa).

A run of 3 helical transmembrane segments spans residues 1–21, 59–79, and 86–106; these read MLFF…VLVF, YTYF…SLLL, and VLYK…IGFL.

The protein belongs to the complex I subunit 3 family.

Its subcellular location is the mitochondrion membrane. The enzyme catalyses a ubiquinone + NADH + 5 H(+)(in) = a ubiquinol + NAD(+) + 4 H(+)(out). In terms of biological role, core subunit of the mitochondrial membrane respiratory chain NADH dehydrogenase (Complex I) that is believed to belong to the minimal assembly required for catalysis. Complex I functions in the transfer of electrons from NADH to the respiratory chain. The immediate electron acceptor for the enzyme is believed to be ubiquinone. This chain is NADH-ubiquinone oxidoreductase chain 3 (ND3), found in Fasciola hepatica (Liver fluke).